The primary structure comprises 213 residues: Adenylate kinase (213 aa).

Gly-14–Thr-19 contacts ATP. Residues Ser-34–Val-63 are NMP. AMP contacts are provided by residues Thr-35, Arg-40, Ala-61–Val-63, Gly-89–Arg-92, and Gln-96. Residues Ser-129–Asp-162 are LID. Arg-130 provides a ligand contact to ATP. Zn(2+) is bound by residues Cys-133 and Cys-136. Position 139–140 (Ile-139–Tyr-140) interacts with ATP. Residues Cys-149 and Cys-152 each contribute to the Zn(2+) site. Positions 159 and 170 each coordinate AMP. Position 198 (Asn-198) interacts with ATP.

The protein belongs to the adenylate kinase family. In terms of assembly, monomer.

It is found in the cytoplasm. It carries out the reaction AMP + ATP = 2 ADP. It functions in the pathway purine metabolism; AMP biosynthesis via salvage pathway; AMP from ADP: step 1/1. Its function is as follows. Catalyzes the reversible transfer of the terminal phosphate group between ATP and AMP. Plays an important role in cellular energy homeostasis and in adenine nucleotide metabolism. In Chlamydia pneumoniae (Chlamydophila pneumoniae), this protein is Adenylate kinase.